The sequence spans 504 residues: Syntaphilin (504 aa).

The interval 1 to 74 is disordered; sequence MAMSLQGSRR…HGIKPPTPEQ (74 aa). 2 stretches are compositionally biased toward low complexity: residues 7-26 and 33-49; these read GSRRASAGSRRRTSPPVSVR and SLSSSSNSGSCKGSDSS. A coiled-coil region spans residues 79–161; that stretch reads LQQKEVCIRH…VKNNLIDKDK (83 aa). Positions 191-244 are disordered; sequence VAKEEGTGESAGGSPARSLTRSSTYTKLSDPAVCGDRQAGDPSNTPAEDRADSG. A phosphoserine mark is found at S200 and S204. Polar residues predominate over residues 207–217; the sequence is RSLTRSSTYTK. T214 carries the post-translational modification Phosphothreonine. Phosphoserine is present on S219. The residue at position 235 (T235) is a Phosphothreonine. The chain crosses the membrane as a helical span at residues 437–456; that stretch reads YIVDLLAVVVPAVPTVAWLC.

Binds to STX1A. Interacts with DNM1; this interaction inhibits the binding of DNM1 to AMPH and DNM1-receptor-mediated endocytosis.

The protein localises to the membrane. Its subcellular location is the synapse. The protein resides in the synaptosome. Its function is as follows. Inhibits SNARE complex formation by absorbing free STX1A. The sequence is that of Syntaphilin from Rattus norvegicus (Rat).